A 111-amino-acid polypeptide reads, in one-letter code: Phosphoribosyl-ATP pyrophosphatase (111 aa).

It belongs to the PRA-PH family.

The protein localises to the cytoplasm. The catalysed reaction is 1-(5-phospho-beta-D-ribosyl)-ATP + H2O = 1-(5-phospho-beta-D-ribosyl)-5'-AMP + diphosphate + H(+). Its pathway is amino-acid biosynthesis; L-histidine biosynthesis; L-histidine from 5-phospho-alpha-D-ribose 1-diphosphate: step 2/9. The protein is Phosphoribosyl-ATP pyrophosphatase (hisE) of Azospirillum brasilense.